A 156-amino-acid chain; its full sequence is RNA pyrophosphohydrolase (156 aa).

In terms of domain architecture, Nudix hydrolase spans 6–148; that stretch reads NYRPNVAAIV…KKNIYVKVIK (143 aa). The Nudix box signature appears at 43–64; the sequence is GGIDKGESVKNALFRELKEEIG.

The protein belongs to the Nudix hydrolase family. RppH subfamily. It depends on a divalent metal cation as a cofactor.

Functionally, accelerates the degradation of transcripts by removing pyrophosphate from the 5'-end of triphosphorylated RNA, leading to a more labile monophosphorylated state that can stimulate subsequent ribonuclease cleavage. The sequence is that of RNA pyrophosphohydrolase from Campylobacter jejuni subsp. jejuni serotype O:6 (strain 81116 / NCTC 11828).